The chain runs to 171 residues: Large ribosomal subunit protein uL10 (171 aa).

This sequence belongs to the universal ribosomal protein uL10 family. As to quaternary structure, part of the ribosomal stalk of the 50S ribosomal subunit. The N-terminus interacts with L11 and the large rRNA to form the base of the stalk. The C-terminus forms an elongated spine to which L12 dimers bind in a sequential fashion forming a multimeric L10(L12)X complex.

Functionally, forms part of the ribosomal stalk, playing a central role in the interaction of the ribosome with GTP-bound translation factors. The sequence is that of Large ribosomal subunit protein uL10 from Nitrosomonas europaea (strain ATCC 19718 / CIP 103999 / KCTC 2705 / NBRC 14298).